The sequence spans 309 residues: MRRAALWLWLCALALRLQPVLPQIMAVNVPPEDQDGSGDDSDNFSGSGTGALPDITLSRQTSSTLKDVWLLTATPTAPEPTSRDTEATFTSILPAGEKPGEGEPVLIAEVDTSSTTWDKELEVTTRPRETTQLLVTHRVSTARATTAQAPVTSHPHRDVQPGLHETLAPTAPGQPDHQPPSGGTSVIKEVAEDGATNQLPTGEGSGEQDFTFETSGENTAVAAIEPDQRNQPPVDEGATGASQGLLDRKEVLGGVIAGGLVGLIFAVCLVGFMLYRMKKKDEGSYSLEEPKQANGGAYQKPTKQEEFYA.

The first 22 residues, 1 to 22, serve as a signal peptide directing secretion; it reads MRRAALWLWLCALALRLQPVLP. Topologically, residues 24–253 are extracellular; that stretch reads IMAVNVPPED…GLLDRKEVLG (230 aa). Disordered stretches follow at residues 28–57 and 142–185; these read NVPP…DITL and ARAT…GGTS. Residues 32 to 42 are compositionally biased toward acidic residues; that stretch reads EDQDGSGDDSD. An O-linked (Xyl...) (chondroitin sulfate) serine glycan is attached at serine 37. Residue asparagine 43 is glycosylated (N-linked (GlcNAc...) asparagine). Serine 45 and serine 47 each carry an O-linked (Xyl...) (heparan sulfate) serine glycan. Over residues 142–151 the composition is skewed to polar residues; the sequence is ARATTAQAPV. O-linked (Xyl...) (chondroitin sulfate) serine glycosylation is found at serine 205 and serine 215. Residues 254 to 274 traverse the membrane as a helical segment; the sequence is GVIAGGLVGLIFAVCLVGFML. The Cytoplasmic portion of the chain corresponds to 275–309; the sequence is YRMKKKDEGSYSLEEPKQANGGAYQKPTKQEEFYA. The segment at 283–309 is disordered; that stretch reads GSYSLEEPKQANGGAYQKPTKQEEFYA. The residue at position 284 (serine 284) is a Phosphoserine.

The protein belongs to the syndecan proteoglycan family. In terms of assembly, interacts with CDCP1. Interacts (via C-terminus) with TIAM1 (via PDZ domain). Interacts with MDK. Shedding is enhanced by a number of factors such as heparanase, thrombin or EGF. Also by stress and wound healing. PMA-mediated shedding is inhibited by TIMP3.

It localises to the membrane. It is found in the secreted. The protein resides in the extracellular exosome. In terms of biological role, cell surface proteoglycan that contains both heparan sulfate and chondroitin sulfate and that links the cytoskeleton to the interstitial matrix. Regulates exosome biogenesis in concert with SDCBP and PDCD6IP. Able to induce its own expression in dental mesenchymal cells and also in the neighboring dental epithelial cells via an MSX1-mediated pathway. The polypeptide is Syndecan-1 (Cricetulus griseus (Chinese hamster)).